The chain runs to 59 residues: Salivary thrombin inhibitor XC-43 (59 aa).

Positions 1 to 23 (MNLQFLFIFIAFCVMLFAQIVTA) are cleaved as a signal peptide.

In terms of assembly, interacts with human F2 (thrombin). As to expression, salivary gland (at protein level).

Its subcellular location is the secreted. Functionally, anticoagulant protein that acts as a competitive inhibitor of host thrombin. Inhibits thrombin-mediated host platelet aggregation. In Xenopsylla cheopis (Oriental rat flea), this protein is Salivary thrombin inhibitor XC-43.